A 507-amino-acid chain; its full sequence is ATP synthase subunit alpha, chloroplastic (507 aa).

Position 170–177 (170–177 (GDRQTGKT)) interacts with ATP.

It belongs to the ATPase alpha/beta chains family. In terms of assembly, F-type ATPases have 2 components, CF(1) - the catalytic core - and CF(0) - the membrane proton channel. CF(1) has five subunits: alpha(3), beta(3), gamma(1), delta(1), epsilon(1). CF(0) has four main subunits: a, b, b' and c.

The protein localises to the plastid. Its subcellular location is the chloroplast thylakoid membrane. The catalysed reaction is ATP + H2O + 4 H(+)(in) = ADP + phosphate + 5 H(+)(out). Functionally, produces ATP from ADP in the presence of a proton gradient across the membrane. The alpha chain is a regulatory subunit. In Illicium oligandrum (Star anise), this protein is ATP synthase subunit alpha, chloroplastic.